Consider the following 137-residue polypeptide: Large ribosomal subunit protein uL16 (137 aa).

The protein belongs to the universal ribosomal protein uL16 family. In terms of assembly, part of the 50S ribosomal subunit.

Binds 23S rRNA and is also seen to make contacts with the A and possibly P site tRNAs. In Legionella pneumophila (strain Paris), this protein is Large ribosomal subunit protein uL16.